Here is a 307-residue protein sequence, read N- to C-terminus: Transcription factor DIVARICATA (307 aa).

One can recognise an SANT domain in the interval 21 to 74 (RSTTRWTAAENKAFENALAVFDENTPNRWERVAERVPGKTVGDVMRQYKELEDD). Residues 109–133 (QSYGTGGRKSSSGRPSEQERKKGVP) are disordered. The span at 124 to 133 (SEQERKKGVP) shows a compositional bias: basic and acidic residues. The HTH myb-type domain maps to 126-182 (QERKKGVPWTEEEHKLFLMGLKKYGKGDWRNISRNFVITRTPTQVASHAQKYFIRQL). A DNA-binding region (H-T-H motif) is located at residues 154-178 (WRNISRNFVITRTPTQVASHAQKYF). Composition is skewed to polar residues over residues 196 to 206 (ITTVNLSDNQT) and 222 to 231 (MAQQQTSSTS). The segment at 196 to 231 (ITTVNLSDNQTPSPDNKKPPSSPDHSMAQQQTSSTS) is disordered.

The protein localises to the nucleus. Functionally, involved in the dorsovental asymmetry of flowers. Promotes ventral identity. This Antirrhinum majus (Garden snapdragon) protein is Transcription factor DIVARICATA (DIVARICATA).